Reading from the N-terminus, the 124-residue chain is MADINKIAEELGTLTILEAADLVKLLEEKWGVSAAAPVAAAGAAAAPAEAEEEKTEFNVVLTEAGANKIAVIKAVREVKAGLGLVDAKKLVEGTPAVILEAVSKDEANAAKAKLEEAGAKVDVK.

Belongs to the bacterial ribosomal protein bL12 family. In terms of assembly, homodimer. Part of the ribosomal stalk of the 50S ribosomal subunit. Forms a multimeric L10(L12)X complex, where L10 forms an elongated spine to which 2 to 4 L12 dimers bind in a sequential fashion. Binds GTP-bound translation factors.

Functionally, forms part of the ribosomal stalk which helps the ribosome interact with GTP-bound translation factors. Is thus essential for accurate translation. The sequence is that of Large ribosomal subunit protein bL12 from Akkermansia muciniphila (strain ATCC BAA-835 / DSM 22959 / JCM 33894 / BCRC 81048 / CCUG 64013 / CIP 107961 / Muc).